The following is a 444-amino-acid chain: CRAL-TRIO domain-containing protein C3H8.02 (444 aa).

Position 40 is a phosphoserine (S40). T43 carries the post-translational modification Phosphothreonine. S81 is subject to Phosphoserine. The CRAL-TRIO domain maps to 171 to 330 (DDDFVRQLRI…EFGGPNPWRY (160 aa)). T418 carries the phosphothreonine modification.

This is CRAL-TRIO domain-containing protein C3H8.02 from Schizosaccharomyces pombe (strain 972 / ATCC 24843) (Fission yeast).